A 210-amino-acid chain; its full sequence is Proteasome subunit beta 2 (210 aa).

The propeptide at 1–12 is removed in mature form; by autocatalysis; the sequence is MSNNVEEKILHG. T13 acts as the Nucleophile in catalysis.

This sequence belongs to the peptidase T1B family. In terms of assembly, the 20S proteasome core is composed of 14 alpha and 14 beta subunits that assemble into four stacked heptameric rings, resulting in a barrel-shaped structure. The two inner rings, each composed of seven catalytic beta subunits, are sandwiched by two outer rings, each composed of seven alpha subunits. The catalytic chamber with the active sites is on the inside of the barrel. Has a gated structure, the ends of the cylinder being occluded by the N-termini of the alpha-subunits. Is capped at one or both ends by the proteasome regulatory ATPase, PAN.

Its subcellular location is the cytoplasm. It carries out the reaction Cleavage of peptide bonds with very broad specificity.. The formation of the proteasomal ATPase PAN-20S proteasome complex, via the docking of the C-termini of PAN into the intersubunit pockets in the alpha-rings, triggers opening of the gate for substrate entry. Interconversion between the open-gate and close-gate conformations leads to a dynamic regulation of the 20S proteasome proteolysis activity. Component of the proteasome core, a large protease complex with broad specificity involved in protein degradation. This Cenarchaeum symbiosum (strain A) protein is Proteasome subunit beta 2.